Here is a 1178-residue protein sequence, read N- to C-terminus: Ubiquitin carboxyl-terminal hydrolase cyk-3 (1178 aa).

3 EF-hand domains span residues 28–60 (EEYRRIRQAFQRFKNGCINYDEFCYHVLGGAQI), 175–210 (FPDSYAERLFAVFDENRDGQIDFRELVCTLSALCRG), and 211–246 (PLPGRISQLARIWDVDCDKLLSDEELSNMYKDLNVP). Ca(2+)-binding residues include Asp188, Asn190, Asp192, Gln194, Glu199, Asp224, Asp226, Asp228, and Glu235. A DUSP domain is found at 296–410 (ESRKMELQIV…VDSQFTRKYL (115 aa)). Positions 570–1175 (VGLVNYGNFC…GAYLLFYERK (606 aa)) constitute a USP domain. Catalysis depends on Cys579, which acts as the Nucleophile. Residues 681 to 725 (SNKSLHPSPEESEGTDSNKLSDSSKKKEADKEEADEEKAERSWTE) form a disordered region. The active-site Proton acceptor is His1134.

The protein belongs to the peptidase C19 family. Expressed in excretory cells, coelomocytes, head neurons, hypodermal cells, germ cells, oocytes, sperm and pharynx (at protein level).

It localises to the nucleus. The protein localises to the cytoplasm. It is found in the cytoskeleton. The protein resides in the microtubule organizing center. The catalysed reaction is Thiol-dependent hydrolysis of ester, thioester, amide, peptide and isopeptide bonds formed by the C-terminal Gly of ubiquitin (a 76-residue protein attached to proteins as an intracellular targeting signal).. In terms of biological role, ubiquitin-protein hydrolase which cleaves ubiquitin from ubiquitinated proteins. Plays a role in embryo osmoregulation. Probably by regulating osmosis, controls actin redistribution in the 1-cell embryos and thus actin-dependent processes such as cytokinesis and P-granules segregation. During the first embryonic mitotic division, involved in the formation of a functional microtubule organizing center provided by the male pronucleus. Acts as a positive regulator of the mTORC1 signaling. This chain is Ubiquitin carboxyl-terminal hydrolase cyk-3, found in Caenorhabditis elegans.